Consider the following 203-residue polypeptide: uncharacterized protein (203 aa).

The disordered stretch occupies residues 117–138 (SSDPKLKQPSNCLNDQTNNDSA). A compositionally biased stretch (polar residues) spans 124–138 (QPSNCLNDQTNNDSA).

The protein localises to the cytoplasm. Its subcellular location is the nucleus. This is an uncharacterized protein from Schizosaccharomyces pombe (strain 972 / ATCC 24843) (Fission yeast).